Reading from the N-terminus, the 621-residue chain is Phytoene desaturase (621 aa).

A signal peptide spans Met1–Ala23. Residues His394–Lys425 are disordered. The span at Gln397–Pro414 shows a compositional bias: polar residues. The chain crosses the membrane as a helical span at residues Trp598–Met618.

The protein belongs to the carotenoid/retinoid oxidoreductase family. Requires NAD(+) as cofactor.

It is found in the membrane. The enzyme catalyses 15-cis-phytoene + 5 A = all-trans-3,4-didehydrolycopene + 5 AH2. The protein operates within carotenoid biosynthesis; lycopene biosynthesis. Its function is as follows. Phytoene desaturase involved in the carotenoid biosynthesis pathway. Converts phytoene into 3,4-didehydrolycopene via the intermediary of phytofluene, zeta-carotene, neurosporene and lycopene, by introducing up to five double bonds into phytoene. This is Phytoene desaturase (PDH1) from Cercospora nicotianae (Barn spot disease fungus).